The primary structure comprises 252 residues: Centromere protein V (252 aa).

The tract at residues 1-80 is disordered; the sequence is MRRTRSAVAT…EEPPPAVTPA (80 aa). Ser18 is modified (phosphoserine). Arg39 bears the Omega-N-methylarginine mark. Over residues 54 to 64 the composition is skewed to pro residues; it reads SAKPRPKPPPR. At Thr78 the chain carries Phosphothreonine. The 113-residue stretch at 125 to 237 folds into the CENP-V/GFA domain; the sequence is HTGGCHCGAV…TEEFNGSDWE (113 aa). 7 residues coordinate Zn(2+): Cys129, Cys131, Cys149, Cys151, Cys154, Cys193, and Cys196. Ser234 is modified (phosphoserine).

It belongs to the Gfa family. It depends on Zn(2+) as a cofactor.

The protein resides in the chromosome. It localises to the centromere. The protein localises to the kinetochore. Its subcellular location is the nucleus. It is found in the cytoplasm. The protein resides in the cytoskeleton. It localises to the spindle. In terms of biological role, required for distribution of pericentromeric heterochromatin in interphase nuclei and for centromere formation and organization, chromosome alignment and cytokinesis. This Mus musculus (Mouse) protein is Centromere protein V (Cenpv).